The sequence spans 552 residues: Probable protein kinase UbiB (552 aa).

The region spanning 121–504 (HFDTVPLASA…QGLQRRVVNA (384 aa)) is the Protein kinase domain. Residues 127 to 135 (LASASISQV) and lysine 149 contribute to the ATP site. Catalysis depends on aspartate 284, which acts as the Proton acceptor. The next 2 helical transmembrane spans lie at 501 to 521 (VVNA…YGLH) and 530 to 550 (IPVW…SAWW).

It belongs to the ABC1 family. UbiB subfamily.

It is found in the cell inner membrane. The protein operates within cofactor biosynthesis; ubiquinone biosynthesis [regulation]. Its function is as follows. Is probably a protein kinase regulator of UbiI activity which is involved in aerobic coenzyme Q (ubiquinone) biosynthesis. In Xylella fastidiosa (strain M12), this protein is Probable protein kinase UbiB.